We begin with the raw amino-acid sequence, 527 residues long: Hopanoid C-2 methylase (527 aa).

Residues 36–148 (VAAFMPPQGL…AKLTHDVTRP (113 aa)) enclose the B12-binding domain. The region spanning 173–408 (AECSKYLLGS…HDQVVAMWKD (236 aa)) is the Radical SAM core domain. 3 residues coordinate [4Fe-4S] cluster: Cys189, Cys193, and Cys196.

This sequence belongs to the radical SAM superfamily. [4Fe-4S] cluster serves as cofactor.

Required for methylation of hopanoids at the C-2 position. This chain is Hopanoid C-2 methylase, found in Rhodopseudomonas palustris (strain TIE-1).